A 540-amino-acid chain; its full sequence is Chaperonin GroEL 3 (540 aa).

ATP contacts are provided by residues 30-33 (TLGP), Lys51, 87-91 (DGTTT), Gly415, 479-481 (NAA), and Asp495.

The protein belongs to the chaperonin (HSP60) family. As to quaternary structure, forms a cylinder of 14 subunits composed of two heptameric rings stacked back-to-back. Interacts with the co-chaperonin GroES.

Its subcellular location is the cytoplasm. It carries out the reaction ATP + H2O + a folded polypeptide = ADP + phosphate + an unfolded polypeptide.. Its function is as follows. Together with its co-chaperonin GroES, plays an essential role in assisting protein folding. The GroEL-GroES system forms a nano-cage that allows encapsulation of the non-native substrate proteins and provides a physical environment optimized to promote and accelerate protein folding. This chain is Chaperonin GroEL 3, found in Burkholderia cenocepacia (strain HI2424).